The following is a 219-amino-acid chain: Octanoyltransferase (219 aa).

Positions threonine 31–alanine 206 constitute a BPL/LPL catalytic domain. Substrate contacts are provided by residues arginine 70–histidine 77, serine 137–glycine 139, and glycine 150–alanine 152. The active-site Acyl-thioester intermediate is the cysteine 168.

It belongs to the LipB family.

The protein resides in the cytoplasm. The catalysed reaction is octanoyl-[ACP] + L-lysyl-[protein] = N(6)-octanoyl-L-lysyl-[protein] + holo-[ACP] + H(+). It functions in the pathway protein modification; protein lipoylation via endogenous pathway; protein N(6)-(lipoyl)lysine from octanoyl-[acyl-carrier-protein]: step 1/2. Catalyzes the transfer of endogenously produced octanoic acid from octanoyl-acyl-carrier-protein onto the lipoyl domains of lipoate-dependent enzymes. Lipoyl-ACP can also act as a substrate although octanoyl-ACP is likely to be the physiological substrate. This chain is Octanoyltransferase, found in Sodalis glossinidius (strain morsitans).